We begin with the raw amino-acid sequence, 532 residues long: Flavin-containing monooxygenase 1 (532 aa).

Ala2 carries the post-translational modification N-acetylalanine. Topologically, residues 2-510 (AKRVAIVGAG…ARVVQESPSP (509 aa)) are lumenal. FAD is bound by residues 9–13 (GAGVS), Glu32, 40–41 (LW), and 61–62 (NS). NADP(+)-binding positions include 60–61 (SN) and 195–198 (SGTD). The helical transmembrane segment at 511–531 (FESFLKVFSFLALLVAIFLIF) threads the bilayer. Residue Leu532 is a topological domain, cytoplasmic.

This sequence belongs to the FMO family. Requires FAD as cofactor. In terms of tissue distribution, expressed mainly in fetal and adult liver.

The protein localises to the endoplasmic reticulum membrane. The catalysed reaction is hypotaurine + NADPH + O2 + H(+) = taurine + NADP(+) + H2O. It catalyses the reaction hypotaurine + NADH + O2 + H(+) = taurine + NAD(+) + H2O. The enzyme catalyses trimethylamine + NADPH + O2 = trimethylamine N-oxide + NADP(+) + H2O. It carries out the reaction N,N-dimethylaniline + NADPH + O2 + H(+) = N,N-dimethylaniline N-oxide + NADP(+) + H2O. Functionally, broad spectrum monooxygenase that catalyzes the oxygenation of a wide variety of nitrogen- and sulfur-containing compounds including xenobiotics. Catalyzes the S-oxygenation of hypotaurine to produce taurine, an organic osmolyte involved in cell volume regulation as well as a variety of cytoprotective and developmental processes. In vitro, catalyzes the N-oxygenation of trimethylamine (TMA) to produce trimethylamine N-oxide (TMAO) and could therefore participate to the detoxification of this compound that is generated by the action of gut microbiota from dietary precursors such as choline, choline containing compounds, betaine or L-carnitine. This chain is Flavin-containing monooxygenase 1, found in Homo sapiens (Human).